Reading from the N-terminus, the 515-residue chain is 2-isopropylmalate synthase (515 aa).

The 263-residue stretch at 4 to 266 folds into the Pyruvate carboxyltransferase domain; that stretch reads INIFDTTLRD…ETRLNLQEIK (263 aa). 4 residues coordinate Mn(2+): Asp13, His201, His203, and Asn237. The tract at residues 391-515 is regulatory domain; it reads QLSSLQVQYG…RAENQKVAMQ (125 aa).

It belongs to the alpha-IPM synthase/homocitrate synthase family. LeuA type 1 subfamily. Homodimer. The cofactor is Mn(2+).

The protein localises to the cytoplasm. It catalyses the reaction 3-methyl-2-oxobutanoate + acetyl-CoA + H2O = (2S)-2-isopropylmalate + CoA + H(+). The protein operates within amino-acid biosynthesis; L-leucine biosynthesis; L-leucine from 3-methyl-2-oxobutanoate: step 1/4. Functionally, catalyzes the condensation of the acetyl group of acetyl-CoA with 3-methyl-2-oxobutanoate (2-ketoisovalerate) to form 3-carboxy-3-hydroxy-4-methylpentanoate (2-isopropylmalate). In Geobacillus sp. (strain WCH70), this protein is 2-isopropylmalate synthase.